Reading from the N-terminus, the 718-residue chain is Polyribonucleotide nucleotidyltransferase (718 aa).

Mg(2+) contacts are provided by Asp487 and Asp493. A KH domain is found at 554-613 (PRIETFKIPTDKIREVIGTGGKVIREIVEKTGAKVNIEDDGTVKVASSDGESIKAAIKWI). The 69-residue stretch at 623–691 (GEIYEGTVVK…DRGKTRLSMK (69 aa)) folds into the S1 motif domain. Residues 692–718 (VVDQETGEDLEAKQKAEGDAPREAAGE) are disordered. Residues 701–718 (LEAKQKAEGDAPREAAGE) show a composition bias toward basic and acidic residues.

Belongs to the polyribonucleotide nucleotidyltransferase family. It depends on Mg(2+) as a cofactor.

It localises to the cytoplasm. It carries out the reaction RNA(n+1) + phosphate = RNA(n) + a ribonucleoside 5'-diphosphate. Its function is as follows. Involved in mRNA degradation. Catalyzes the phosphorolysis of single-stranded polyribonucleotides processively in the 3'- to 5'-direction. The protein is Polyribonucleotide nucleotidyltransferase of Nitrobacter winogradskyi (strain ATCC 25391 / DSM 10237 / CIP 104748 / NCIMB 11846 / Nb-255).